We begin with the raw amino-acid sequence, 199 residues long: NADH-quinone oxidoreductase subunit C (199 aa).

This sequence belongs to the complex I 30 kDa subunit family. As to quaternary structure, NDH-1 is composed of 14 different subunits. Subunits NuoB, C, D, E, F, and G constitute the peripheral sector of the complex.

Its subcellular location is the cell inner membrane. The catalysed reaction is a quinone + NADH + 5 H(+)(in) = a quinol + NAD(+) + 4 H(+)(out). Its function is as follows. NDH-1 shuttles electrons from NADH, via FMN and iron-sulfur (Fe-S) centers, to quinones in the respiratory chain. The immediate electron acceptor for the enzyme in this species is believed to be ubiquinone. Couples the redox reaction to proton translocation (for every two electrons transferred, four hydrogen ions are translocated across the cytoplasmic membrane), and thus conserves the redox energy in a proton gradient. The polypeptide is NADH-quinone oxidoreductase subunit C (Rhodobacter capsulatus (Rhodopseudomonas capsulata)).